The chain runs to 288 residues: 4-hydroxybenzoate octaprenyltransferase (288 aa).

A run of 6 helical transmembrane segments spans residues 20-40 (IGTL…AGGL), 43-63 (LKVF…GCII), 96-116 (LFVV…PLVV), 210-230 (QIIG…GMVA), 234-254 (AIYA…QKLI), and 262-282 (CFTA…ALML).

Belongs to the UbiA prenyltransferase family. Requires Mg(2+) as cofactor.

It localises to the cell inner membrane. It carries out the reaction all-trans-octaprenyl diphosphate + 4-hydroxybenzoate = 4-hydroxy-3-(all-trans-octaprenyl)benzoate + diphosphate. The protein operates within cofactor biosynthesis; ubiquinone biosynthesis. Functionally, catalyzes the prenylation of para-hydroxybenzoate (PHB) with an all-trans polyprenyl group. Mediates the second step in the final reaction sequence of ubiquinone-8 (UQ-8) biosynthesis, which is the condensation of the polyisoprenoid side chain with PHB, generating the first membrane-bound Q intermediate 3-octaprenyl-4-hydroxybenzoate. The chain is 4-hydroxybenzoate octaprenyltransferase from Shewanella pealeana (strain ATCC 700345 / ANG-SQ1).